Reading from the N-terminus, the 210-residue chain is Large ribosomal subunit protein bL25 (210 aa).

The interval 190–210 is disordered; it reads LKSEGAEGGEAEAGQAEEGEE. Residues 196 to 210 show a composition bias toward acidic residues; sequence EGGEAEAGQAEEGEE.

The protein belongs to the bacterial ribosomal protein bL25 family. CTC subfamily. In terms of assembly, part of the 50S ribosomal subunit; part of the 5S rRNA/L5/L18/L25 subcomplex. Contacts the 5S rRNA. Binds to the 5S rRNA independently of L5 and L18.

This is one of the proteins that binds to the 5S RNA in the ribosome where it forms part of the central protuberance. This Chelativorans sp. (strain BNC1) protein is Large ribosomal subunit protein bL25.